Consider the following 464-residue polypeptide: Probable 1,4-beta-D-glucan cellobiohydrolase C (464 aa).

An N-terminal signal peptide occupies residues 1–19 (MKNFAPSLALSLLLPTVQA). The 36-residue stretch at 20–55 (QQTMWGQCGGAGWSGATDCVAGGVCSTQNAYYAQCL) folds into the CBM1 domain. 2 cysteine pairs are disulfide-bonded: cysteine 27–cysteine 44 and cysteine 38–cysteine 54. Residues 59 to 102 (TTATTLSTTSKGTTTTTTSSTTSTGGGSSSTTTKTSTSAGPTVT) form a thr-rich linker region. Positions 65–100 (STTSKGTTTTTTSSTTSTGGGSSSTTTKTSTSAGPT) are enriched in low complexity. The disordered stretch occupies residues 65–108 (STTSKGTTTTTTSSTTSTGGGSSSTTTKTSTSAGPTVTGSPSGN). Positions 103-464 (GSPSGNPFSG…QLLTNANPAF (362 aa)) are catalytic. The active site involves aspartate 194. Intrachain disulfides connect cysteine 195-cysteine 254 and cysteine 386-cysteine 433. Aspartate 240 serves as the catalytic Proton donor. Aspartate 419 serves as the catalytic Nucleophile.

Belongs to the glycosyl hydrolase 6 (cellulase B) family.

Its subcellular location is the secreted. The enzyme catalyses Hydrolysis of (1-&gt;4)-beta-D-glucosidic linkages in cellulose and cellotetraose, releasing cellobiose from the non-reducing ends of the chains.. Its function is as follows. The biological conversion of cellulose to glucose generally requires three types of hydrolytic enzymes: (1) Endoglucanases which cut internal beta-1,4-glucosidic bonds; (2) Exocellobiohydrolases that cut the disaccharide cellobiose from the non-reducing end of the cellulose polymer chain; (3) Beta-1,4-glucosidases which hydrolyze the cellobiose and other short cello-oligosaccharides to glucose. This is Probable 1,4-beta-D-glucan cellobiohydrolase C (cbhC) from Aspergillus clavatus (strain ATCC 1007 / CBS 513.65 / DSM 816 / NCTC 3887 / NRRL 1 / QM 1276 / 107).